A 655-amino-acid chain; its full sequence is MARKQQFDYNEDAIQVLEGLEAVRKRPGMYIGSTDARGLHHLVYEIVDNSVDEVLAGHGDHIIVKIHKDNSISVQDRGRGMPTGMHKLGKPTPEVILTVLHAGGKFGQGGYKTSGGLHGVGASVVNALSEWLTVTIERDGFVYQQRFENGGKPVTSLEKIGKTKKTGTLTHFKPDPTMFSTTTYNFETLSERLRESAFLLKGLKIELIDERNDQREVFYYENGIEAFVAYLNEEKDVLSEVVSFEGEHHSIEVDFAFQFNDGYSENILSFVNNVRTKDGGTHESGAKTAMTRAFNEYARKVALLKEKDKNLEGTDIREGLSAIISVRIPEELLQFEGQTKGKLGTSEARSAVDAIVSEQLAYFLEENRDTATLLVKKAIKASQAREAARKAREEARSGKKRKKSEATLSGKLTPAGSRNPAKNELYLVEGDSAGGSAKQGRDRRFQAVLPLRGKVINTEKAKLADIFKNEEINTIIHAIGGGVGADFSIDDINYDKIIIMTDADTDGAHIQVLLLTFFYRYMKPLIEHGKVFIALPPLYKVSKGSGKKEIIEYAWSDEEMGDVLKKVGKGYTIQRYKGLGEMNADQLWETTMNPESRTLVRVKIDDAARVERRVTTLMGDKVEPRRKWIEKNVAFGLDEESNILENENLSVAEEV.

ATP contacts are provided by residues Tyr9, Asn49, Asp76, 116–122, and Lys340; that span reads GLHGVGA. The segment covering 387-397 has biased composition (basic and acidic residues); that stretch reads AARKAREEARS. The segment at 387-419 is disordered; sequence AARKAREEARSGKKRKKSEATLSGKLTPAGSRN. The Toprim domain occupies 423–537; that stretch reads NELYLVEGDS…HGKVFIALPP (115 aa). The Mg(2+) site is built by Glu429, Asp502, and Asp504.

This sequence belongs to the type II topoisomerase family. ParE type 2 subfamily. In terms of assembly, heterotetramer composed of ParC and ParE. The cofactor is Mg(2+). It depends on Mn(2+) as a cofactor. Ca(2+) is required as a cofactor.

The enzyme catalyses ATP-dependent breakage, passage and rejoining of double-stranded DNA.. Functionally, topoisomerase IV is essential for chromosome segregation. It relaxes supercoiled DNA. Performs the decatenation events required during the replication of a circular DNA molecule. This Bacillus subtilis (strain 168) protein is DNA topoisomerase 4 subunit B.